A 210-amino-acid chain; its full sequence is MADVKELKQVLTGPIINNNPIALQILGVCSALAVTSKMETALVMSLALTVVTAFSNLFISLIRNHIPSSVRIIVQMTIIASLVIVVDQVLQAYAYEIAKQLSVFVGLIITNCIVMGRAEAYAMKTPPMMSFMDGIGNGLGYGAILLGVGFFRELFGNGSLFGIEILSKISDGGWYQPNGLLLLPPSAFFLIGGLIWVIRTYKPEQVEAKG.

6 helical membrane-spanning segments follow: residues 14–34 (PIIN…ALAV), 42–62 (LVMS…ISLI), 72–92 (IIVQ…VLQA), 96–116 (EIAK…IVMG), 131–151 (FMDG…VGFF), and 178–198 (NGLL…IWVI).

Belongs to the NqrDE/RnfAE family. As to quaternary structure, composed of six subunits; NqrA, NqrB, NqrC, NqrD, NqrE and NqrF.

The protein localises to the cell inner membrane. The catalysed reaction is a ubiquinone + n Na(+)(in) + NADH + H(+) = a ubiquinol + n Na(+)(out) + NAD(+). Functionally, NQR complex catalyzes the reduction of ubiquinone-1 to ubiquinol by two successive reactions, coupled with the transport of Na(+) ions from the cytoplasm to the periplasm. NqrA to NqrE are probably involved in the second step, the conversion of ubisemiquinone to ubiquinol. The sequence is that of Na(+)-translocating NADH-quinone reductase subunit D from Shewanella denitrificans (strain OS217 / ATCC BAA-1090 / DSM 15013).